We begin with the raw amino-acid sequence, 378 residues long: Circumsporozoite protein (378 aa).

Residues 1–22 (MKNFNLLVVSSILLVDLFPTNC) form the signal peptide. A disordered region spans residues 50–288 (AQVRQSASRG…AGAGQGQNNE (239 aa)). A compositionally biased stretch (basic and acidic residues) spans 65 to 93 (NPKDEEGADKPKKKEEKKVEPKKPRENKL). The tract at residues 81 to 89 (KKVEPKKPR) is required for the binding to heparan sulfate proteoglycans (HSPGs) on the surface of host hepatocytes. The interval 92-96 (KLKQP) is region I; contains the proteolytic cleavage site. A compositionally biased stretch (low complexity) spans 96–203 (PPAGDGAPEG…RAGGQPAAGG (108 aa)). One copy of the 1-1; truncated repeat lies at 97-102 (PAGDGA). Positions 97–191 (PAGDGAPEGD…AAPAGDGAPA (95 aa)) are 11 X 9 AA tandem repeats of P-[AE]-G-D-G-A-P-A-[AG]. Repeat copies occupy residues 103–111 (PEGDGAPAA), 112–120 (PAGDGAPAA), 121–129 (PAGDGAPAA), 130–138 (PAGDGAPAA), 139–147 (PAGDGAPAA), 148–156 (PAGDGAPAA), 157–165 (PAGDGAPAA), 166–174 (PAGDGAPAA), 175–183 (PAGDGAPAA), 184–191 (PAGDGAPA), 193–208 (NRAG…QAGG), 209–224 (NRAG…QAGG), and 225–240 (NRAG…QAGG). Residues 193–268 (NRAGGQPAAG…GAQAGGANAG (76 aa)) are 6 X 16 AA approximate tandem repeats of N-R-A-G-G-Q-P-A-A-G-G-N-Q-A-G-G. A compositionally biased stretch (low complexity) spans 228–251 (GGQPAAGGNQAGGQPAAGGNQAGA). One copy of the 2-4; approximate; truncated repeat lies at 241-251 (QPAAGGNQAGA). One copy of the 2-5; approximate; truncated repeat lies at 252–260 (QAGGNQAGA). Gly residues-rich tracts occupy residues 252–266 (QAGG…GGAN) and 274–283 (EAGGNAGAGQ). A 2-6; approximate; truncated repeat occupies 261–268 (QAGGANAG). The region spanning 304-356 (KIRSTLGVEWSPCSVTCGKGVRMRRKVSAANKKPEELDVNDLETEVCTMDKCA) is the TSP type-1 domain. Cystine bridges form between cysteine 316-cysteine 350 and cysteine 320-cysteine 355. Threonine 319 carries an O-linked (Fuc) threonine glycan. Residue cysteine 355 is the site of GPI-anchor amidated cysteine attachment. A propeptide spans 356 to 378 (AGIFNVVSNSLRLVILLVLALFN) (removed in mature form).

The protein belongs to the plasmodium circumsporozoite protein family. In terms of processing, during host cell invasion, proteolytically cleaved at the cell membrane in the region I by a papain-like cysteine protease of parasite origin. Cleavage is triggered by the sporozoite contact with highly sulfated heparan sulfate proteoglycans (HSPGs) present on the host hepatocyte cell surface. Cleavage exposes the TSP type-1 (TSR) domain and is required for productive invasion of host hepatocytes but not for adhesion to the host cell membrane. Cleavage is dispensable for sporozoite development in the oocyst, motility and for traversal of host and vector cells. Post-translationally, O-glycosylated; maybe by POFUT2.

It localises to the cell membrane. The protein resides in the cytoplasm. Functionally, essential sporozoite protein. In the mosquito vector, required for sporozoite development in the oocyst, migration through the vector hemolymph and entry into the vector salivary glands. In the vertebrate host, required for sporozoite migration through the host dermis and infection of host hepatocytes. Binds to highly sulfated heparan sulfate proteoglycans (HSPGs) on the surface of host hepatocytes. In the vertebrate host, binds to highly sulfated heparan sulfate proteoglycans (HSPGs) on the surface of host hepatocytes and is required for sporozoite invasion of the host hepatocytes. The sequence is that of Circumsporozoite protein from Plasmodium cynomolgi (strain Berok).